The following is a 278-amino-acid chain: Non-homologous end joining protein Ku (278 aa).

Residues 9–172 form the Ku domain; the sequence is ISFGLVNIPV…MHFAQELVDV (164 aa). The disordered stretch occupies residues 255–278; the sequence is NQTGAGAKKKPAKTAKRGKSRKAA. A compositionally biased stretch (basic residues) spans 261–278; it reads AKKKPAKTAKRGKSRKAA.

It belongs to the prokaryotic Ku family. As to quaternary structure, homodimer. Interacts with LigD.

With LigD forms a non-homologous end joining (NHEJ) DNA repair enzyme, which repairs dsDNA breaks with reduced fidelity. Binds linear dsDNA with 5'- and 3'- overhangs but not closed circular dsDNA nor ssDNA. Recruits and stimulates the ligase activity of LigD. This Opitutus terrae (strain DSM 11246 / JCM 15787 / PB90-1) protein is Non-homologous end joining protein Ku.